Consider the following 731-residue polypeptide: MKLRSSHNASKTLNANNMETLIECQSEGDIKEHPLLASCESEDSICQLIEVKKRKKVLSWPFLMRRLSPASDFSGALETDLKASLFDQPLSIICGDSDTLPRPIQDILTILCLKGPSTEGIFRRAANEKARKELKEELNSGDAVDLERLPVHLLAVVFKDFLRSIPRKLLSSDLFEEWMGALEMQDEEDRIEALKQVADKLPRPNLLLLKHLVYVLHLISKNSEVNRMDSSNLAICIGPNMLTLENDQSLSFEAQKDLNNKVKTLVEFLIDNCFEIFGENIPVHSSITSDDSLEHTDSSDVSTLQNDSAYDSNDPDVESNSSSGISSPSRQPQVPMATAAGLDSAGPQDAREVSPEPIVSTVARLKSSLAQPDRRYSEPSMPSSQECLESRVTNQTLTKSEGDFPVPRVGSRLESEEAEDPFPEEVFPAVQGKTKRPVDLKIKNLAPGSVLPRALVLKAFSSSSLDASSDSSPVASPSSPKRNFFSRHQSFTTKTEKGKPSREIKKHSMSFTFAPHKKVLTKNLSAGSGKSQDFTRDHVPRGVRKESQLAGRIVQENGCETHNQTARGFCLRPHALSVDDVFQGADWERPGSPPSYEEAMQGPAARLVASESQTVGSMTVGSMRARMLEAHCLLPPLPPAHHVEDSRHRGSKEPLPGHGLSPLPERWKQSRTVHASGDSLGHVSGPGRPELLPLRTVSESVQRNKRDCLVRRCSQPVFEADQFQYAKESYI.

Residues 88–277 form the Rho-GAP domain; it reads QPLSIICGDS…FLIDNCFEIF (190 aa). 3 disordered regions span residues 288-421, 464-507, and 641-662; these read TSDD…AEDP, SLDA…IKKH, and HHVE…GLSP. A compositionally biased stretch (polar residues) spans 299–311; sequence SDVSTLQNDSAYD. Residues 319–329 show a composition bias toward low complexity; it reads SNSSSGISSPS. The span at 380 to 399 shows a compositional bias: polar residues; sequence SMPSSQECLESRVTNQTLTK. Position 400 is a phosphoserine (Ser-400). Positions 464–480 are enriched in low complexity; sequence SLDASSDSSPVASPSSP. Basic and acidic residues-rich tracts occupy residues 494–503 and 641–652; these read KTEKGKPSRE and HHVEDSRHRGSK.

Its function is as follows. May function as a GTPase-activating protein and may play important roles during T-cell activation. This Homo sapiens (Human) protein is T-cell activation Rho GTPase-activating protein (TAGAP).